An 85-amino-acid chain; its full sequence is MKVTLIAILTCAAVLVLHTTAAEELEAESQLVEVGMPDTELAAVDEERFFECSVSCEIEKEGNKDCKKKKCKGGWKCKFNMCVKV.

Residues 1–22 (MKVTLIAILTCAAVLVLHTTAA) form the signal peptide. Residues 23–48 (EELEAESQLVEVGMPDTELAAVDEER) constitute a propeptide that is removed on maturation. 3 disulfide bridges follow: Cys52-Cys66, Cys56-Cys77, and Cys71-Cys82.

It belongs to the neurotoxin 12 (Hwtx-2) family. 02 (Hwtx-2) subfamily. In terms of tissue distribution, expressed by the venom gland.

Its subcellular location is the secreted. Its function is as follows. Postsynaptic neurotoxin. The chain is U4-theraphotoxin-Hhn1m from Cyriopagopus hainanus (Chinese bird spider).